Reading from the N-terminus, the 637-residue chain is Chaperone protein DnaK (637 aa).

Position 196 is a phosphothreonine; by autocatalysis (Thr196). The disordered stretch occupies residues Ala598–Lys637. The span at Ala627–Lys637 shows a compositional bias: acidic residues.

It belongs to the heat shock protein 70 family.

Acts as a chaperone. This Chlorobium luteolum (strain DSM 273 / BCRC 81028 / 2530) (Pelodictyon luteolum) protein is Chaperone protein DnaK.